The sequence spans 250 residues: MFPVELDNVTVAYHKKPVLQDISLQVPEGKLIGIIGPNGAGKSTLIKTILGLVPRASGDISIYGKDYKDQRTRIGYVPQRGSVDWDFPTSPLDVVLMGRYGRIGLLKRPKKADVEMAKAALTKVGMHDYAKRQISQLSGGQQQRVFLARALCQNADIYFMDEPFAGVDAATERAIMTLLAELKEKGKTVLVVHHDLQTAEDYFDWILLLHLRKIAFGPTENVFTIENLQKTYGGRLTFLKDKVLAEGHKE.

The 233-residue stretch at 4–236 folds into the ABC transporter domain; that stretch reads VELDNVTVAY…NLQKTYGGRL (233 aa). ATP is bound at residue 36–43; the sequence is GPNGAGKS.

The protein belongs to the ABC transporter superfamily. In terms of assembly, the complex is probably composed of two ATP-binding proteins (MntB), two transmembrane proteins (MntC and MntD) and a solute-binding protein (MntA).

It is found in the cell membrane. Probably part of the ABC transporter complex MntABCD involved in manganese import. Probably responsible for energy coupling to the transport system. The sequence is that of Manganese transport system ATP-binding protein MntB from Bacillus subtilis (strain 168).